Reading from the N-terminus, the 201-residue chain is MAIILPELPYAYDALEPQFDAETMSLHHDKHHATYVANTNAALEKHPEIGENLEELLADVTKIPEDIRQALINNGGGHLNHALFWELLSPEKQDVTPDVAQAIDDAFGSFDAFKEQFTAAATGRFGSGWAWLVVNKEGQLEITSTANQDTPISEGKKPILALDVWEHAYYLNYRNVRPNYIKAFFEIINWKKVSELYQAAK.

Mn(2+) contacts are provided by histidine 27, histidine 81, aspartate 163, and histidine 167.

Belongs to the iron/manganese superoxide dismutase family. As to quaternary structure, homodimer. Mn(2+) is required as a cofactor.

It localises to the secreted. The enzyme catalyses 2 superoxide + 2 H(+) = H2O2 + O2. Functionally, destroys superoxide anion radicals which are normally produced within the cells and which are toxic to biological systems. The polypeptide is Superoxide dismutase [Mn] (sodA) (Streptococcus pyogenes serotype M18 (strain MGAS8232)).